Here is a 137-residue protein sequence, read N- to C-terminus: ATP synthase epsilon chain (137 aa).

It belongs to the ATPase epsilon chain family. In terms of assembly, F-type ATPases have 2 components, CF(1) - the catalytic core - and CF(0) - the membrane proton channel. CF(1) has five subunits: alpha(3), beta(3), gamma(1), delta(1), epsilon(1). CF(0) has three main subunits: a, b and c.

It localises to the cell membrane. Functionally, produces ATP from ADP in the presence of a proton gradient across the membrane. The protein is ATP synthase epsilon chain of Thermobifida fusca (strain YX).